The sequence spans 131 residues: Profilin-1 (131 aa).

The protein belongs to the profilin family. As to quaternary structure, occurs in many kinds of cells as a complex with monomeric actin in a 1:1 ratio.

The protein resides in the cytoplasm. The protein localises to the cytoskeleton. Its function is as follows. Binds to actin and affects the structure of the cytoskeleton. At high concentrations, profilin prevents the polymerization of actin, whereas it enhances it at low concentrations. By binding to PIP2, it inhibits the formation of IP3 and DG. The sequence is that of Profilin-1 from Malus domestica (Apple).